The sequence spans 125 residues: Ribosome-binding factor A (125 aa).

It belongs to the RbfA family. Monomer. Binds 30S ribosomal subunits, but not 50S ribosomal subunits or 70S ribosomes.

The protein localises to the cytoplasm. In terms of biological role, one of several proteins that assist in the late maturation steps of the functional core of the 30S ribosomal subunit. Associates with free 30S ribosomal subunits (but not with 30S subunits that are part of 70S ribosomes or polysomes). Required for efficient processing of 16S rRNA. May interact with the 5'-terminal helix region of 16S rRNA. The sequence is that of Ribosome-binding factor A from Akkermansia muciniphila (strain ATCC BAA-835 / DSM 22959 / JCM 33894 / BCRC 81048 / CCUG 64013 / CIP 107961 / Muc).